A 2263-amino-acid polypeptide reads, in one-letter code: MDYQEYQQFLARINTARDACVAKDIDVDLLMARHDYFGRELCKSLNIEYRNDVPFIDIILDIRPEVDPLTIDAPHITPDNYLYINNVLYIIDYKVSVSNESSVITYDKYYELTRDISDRLSIPIEIVIIRIDPVSRDLHINSDRFKELYPTIVVDINFNQFFDLKQLLYEKFGDDEEFLLKVAHGDFTLTAPWCKTGCPEFWKHPIYKEFKMSMPVPERRLFEESVKFNAYESERWNTNLVKIREYTKKDYSEHISKSAKNIFLASGFYKQPNKNEISEGWTLMVERVQDQREISKSLHDQKPSIHFIWGAHNPGNSNNATFKLILLSKSLQSIKGISTYTEAFKSLGKMMDIGDKAIEYEEFCMSLKSKARSSWKQIMNKKLEPKQINNALVLWEQQFMINNDLIDKSEKLKLFKNFCGIGKHKQFKNKMLEDLEVSKPKILDFDDANMYLASLTMMEQSKKILSKSNGLKPDNFILNEFGSRIKDANKETYDNMHKIFETGYWQCISDFSTLMKNILSVSQYNRHNTFRIAMCANNNVFAIVFPSADIKTKKATVVYSIIVLHKEEENIFNPGCLHGTFKCMNGYISISRAIRLDKERCQRIVSSPGLFLTTCLLFKHDNPTLVMSDIMNFSIYTSLSITKSVLSLTEPARYMIMNSLAISSNVKDYIAEKFSPYTKTLFSVYMTRLIKNACFDAYDQRQRVQLRDIYLSDYDITQKGIKDNRELTSIWFPGSVTLKEYLTQIYLPFYFNAKGLHEKHHVMVDLAKTILEIECEQRENIKEIWSTNCTKQTVNLKILIHSLCKNLLADTSRHNHLRNRIENRNNFRRSITTISTFTSSKSCLKIGDFRKEKELQSVKQKKILEVQSRKMRLANPMFVTDEQVCLEVGHCNYEMLRNAMPNYTDYISTKVFDRLYELLDKKVLTDKPVIEQIMDMMIDHKKFYFTFFNKGQKTSKDREIFVGEYEAKMCMYAVERIAKERCKLNPDEMISEPGDGKLKVLEQKSEQEIRFLVETTRQKNREIDEAIEALATEGYESNLGKIEKLSLGKAKGLKMEINADMSKWSAQDVFYKYFWLIALDPILYPQEKERILYFMCNYMDKELILPDELLFNLLDQKVAYQNDIIATMTNQLNSNTVLIKRNWLQGNFNYTSSYVHSCAMSVYKEILKEAITLLDGSILVNSLVHSDDNQTSITIVQDKMENDKIIDFAMKEFERACLTFGCQANMKKTYVTNCIKEFVSLFNLYGEPFSIYGRFLLTSVGDCAYIGPYEDLASRISSAQTAIKHGCPPSLAWVSIAISHWMTSLTYNMLPGQSNDPIDYFPAENRKDIPIELNGVLDAPLSMISTVGLESGNLYFLIKLLSKYTPVMQKRESVVNQIAEVKNWKVEDLTDNEIFRLKILRYLVLDAEMDPSDIMGETSDMRGRSILTPRKFTTAGSLRKLYSFSKYQDRLSSPGGMVELFTYLLEKPELLVTKGEDMKDYMESVIFRYNSKRFKESLSIQNPAQLFIEQILFSHKPVIDFSGIRDKYINLHDSRALEKEPDILGKVTFTEAYRLLMRDLSSLELTNDDIQVIYSYIILNDPMMITIANTHILSIYGSPQRRMGMSCSTMPEFRNLKLIHHSPALVLRAYSKNNPDIQGADPTEMARDLVHLKEFVENTNLEEKMKVRIAMNEAEKGQRDIVFELKEMTRFYQVCYEYVKSTEHKIKVFILPAKSYTTTDFCSLMQGNLIKDKEWYTVHYLKQILSGGHKAIMQHNATSEQNIAFECFKLITHFADSFIDSLSRSAFLQLIIDEFSYKDVKVSKLYDIIKNGYNRTDFIPLLFRTGDLRQADLDKYDAMKSHERVTWNDWQTSRHLDMGSINLTITGYNRSITIIGEDNKLTYAELCLTRKTPENITISGRKLLGSRHGLKFENMSKIQTYPGNYYITYRKKDRHQFVYQIHSHESITRRNEEHMAIRTRIYNEITPVCVVNVAEVDGDQRILIRSLDYLNNDIFSLSRIKVGLDEFATIKKAHFSKMVSFEGPPIKTGLLDLTELMKSQDLLNLNYDNIRNSNLISFSKLICCEGSDNINDGLEFLSDDPMNFTEGEAIHSTPIFNIYYSKRGERHMTYRNAIKLLIERETKIFEEAFTFSENGFISPENLGCLEAVVSLIKLLKTNEWSTVIDKCIHICLIKNGMDHMYHSFDVPKCFMGNPITRDINWVMFREFINSLPGTDIPPWNVMTENFKKKCIALINSKFETQRDFSEFTKLMKKEGGRSNIEFD.

Positions 1 to 185 are endonuclease; that stretch reads MDYQEYQQFL…EEFLLKVAHG (185 aa). Histidine 34, aspartate 52, aspartate 79, aspartate 92, and tyrosine 93 together coordinate Mn(2+). A RdRp catalytic domain is found at 1042 to 1230; that stretch reads IEKLSLGKAK…GCQANMKKTY (189 aa). Aspartate 1188 is a binding site for Mg(2+). A cap-binding region spans residues 1841–1977; that stretch reads SHERVTWNDW…VCVVNVAEVD (137 aa). Residues cysteine 2064, histidine 2169, aspartate 2178, and histidine 2182 each coordinate Zn(2+).

This sequence belongs to the Bunyavirales RNA polymerase family. In terms of assembly, homomultimer. Interacts with the glycoprotein N; this interaction allows efficient polymerase packaging into virus particles. Interacts with nucleoprotein N. The cofactor is Mn(2+). Mg(2+) serves as cofactor.

The protein resides in the host Golgi apparatus. The protein localises to the host endoplasmic reticulum. Its subcellular location is the host endoplasmic reticulum-Golgi intermediate compartment. It localises to the virion. It carries out the reaction RNA(n) + a ribonucleoside 5'-triphosphate = RNA(n+1) + diphosphate. Functionally, RNA-dependent RNA polymerase, which is responsible for the replication and transcription of the viral RNA genome using antigenomic RNA as an intermediate. During transcription, synthesizes subgenomic RNAs and assures their capping by a cap-snatching mechanism, which involves the endonuclease activity cleaving the host capped pre-mRNAs. These short capped RNAs are then used as primers for viral transcription. The 3'-end of subgenomic mRNAs molecules are not polyadenylated. During replication, the polymerase binds the 5' and 3' vRNA extremities at distinct sites. In turn, significant conformational changes occur in the polymerase and in vRNA to initiate active RNA synthesis. As a consequence of the use of the same enzyme for both transcription and replication, these mechanisms need to be well coordinated. In Bunyavirus La Crosse, this protein is RNA-directed RNA polymerase L (L).